We begin with the raw amino-acid sequence, 277 residues long: Probable CCR4-associated factor 1 homolog 10 (277 aa).

A divalent metal cation contacts are provided by aspartate 40, glutamate 42, aspartate 166, and aspartate 235.

Belongs to the CAF1 family. Component of the CCR4-NOT complex, at least composed of CRR4 and CAF1 proteins. The cofactor is a divalent metal cation.

The protein localises to the nucleus. The protein resides in the cytoplasm. The catalysed reaction is Exonucleolytic cleavage of poly(A) to 5'-AMP.. In terms of biological role, ubiquitous transcription factor required for a diverse set of processes. It is a component of the CCR4 complex involved in the control of gene expression. This is Probable CCR4-associated factor 1 homolog 10 (CAF1-10) from Arabidopsis thaliana (Mouse-ear cress).